The primary structure comprises 180 residues: Telokin-like protein 20 (180 aa).

Residues 112-180 (SKTDAAVHTS…KQKLDNAKQD (69 aa)) form a disordered region. The segment covering 156-165 (DFEENIDDGD) has biased composition (acidic residues).

This Lepidoptera (butterflies and moths) protein is Telokin-like protein 20 (TLP20).